The primary structure comprises 325 residues: Sensor histidine kinase YxdK (325 aa).

Over 1 to 8 (MKLFLRSH) the chain is Cytoplasmic. Residues 9–29 (AVLILLFLLQGLFVFFYYWFA) form a helical membrane-spanning segment. The Extracellular segment spans residues 30–33 (GLHS). A helical membrane pass occupies residues 34-54 (FSHLFYILGVQLLILAGYLAY). The Cytoplasmic portion of the chain corresponds to 55-325 (RWYKDRGVYH…SVRFSFLTKM (271 aa)). Residues 118–325 (QWVHQVKTPL…SVRFSFLTKM (208 aa)) enclose the Histidine kinase domain. A Phosphohistidine; by autocatalysis modification is found at histidine 121.

The protein localises to the cell membrane. The enzyme catalyses ATP + protein L-histidine = ADP + protein N-phospho-L-histidine.. In terms of biological role, probable member of the two-component regulatory system YxdK/YxdJ. May activate YxdJ in response to the antibacterial protein LL-37. The polypeptide is Sensor histidine kinase YxdK (yxdK) (Bacillus subtilis (strain 168)).